The chain runs to 298 residues: Apolipoprotein E (298 aa).

Residues 1–18 (MKVLWAALVVTLLAGCQA) form the signal peptide. A run of 6 repeats spans residues 74 to 95 (LLME…QELA), 96 to 117 (PMAE…SRLR), 118 to 139 (ADME…TMMG), 140 to 161 (QSGE…KRLL), 162 to 183 (RDVE…EGAE), and 223 to 244 (GRLE…EQME). The segment at 74-244 (LLMEDTMKEV…RLEEVREQME (171 aa)) is 8 X 22 AA approximate tandem repeats. Methionine 137 bears the Methionine sulfoxide mark. The residue at position 141 (serine 141) is a Phosphoserine. The segment at 152-162 (HLRKLRKRLLR) is LDL and other lipoprotein receptors binding. 156–159 (LRKR) provides a ligand contact to heparin. The interval 204 to 272 (SLPSQPLRER…SWFEPMMEDM (69 aa)) is lipid-binding and lipoprotein association. Heparin is bound at residue 218 to 225 (GEQMRGRL). The segment at 260 to 272 (RFKSWFEPMMEDM) is specificity for association with VLDL.

Belongs to the apolipoprotein A1/A4/E family. As to quaternary structure, homotetramer. May interact with ABCA1; functionally associated with ABCA1 in the biogenesis of HDLs. May interact with APP/A4 amyloid-beta peptide; the interaction is extremely stable in vitro but its physiological significance is unclear. May interact with MAPT. May interact with MAP2. In the cerebrospinal fluid, interacts with secreted SORL1. Interacts with PMEL; this allows the loading of PMEL luminal fragment on ILVs to induce fibril nucleation. In terms of processing, APOE exists as multiple glycosylated and sialylated glycoforms within cells and in plasma. The extent of glycosylation and sialylation are tissue and context specific. Glycated in plasma VLDL. Post-translationally, phosphorylated by FAM20C in the extracellular medium.

The protein localises to the secreted. The protein resides in the extracellular space. It is found in the extracellular matrix. It localises to the extracellular vesicle. Its subcellular location is the endosome. The protein localises to the multivesicular body. Its function is as follows. APOE is an apolipoprotein, a protein associating with lipid particles, that mainly functions in lipoprotein-mediated lipid transport between organs via the plasma and interstitial fluids. APOE is a core component of plasma lipoproteins and is involved in their production, conversion and clearance. Apolipoproteins are amphipathic molecules that interact both with lipids of the lipoprotein particle core and the aqueous environment of the plasma. As such, APOE associates with chylomicrons, chylomicron remnants, very low density lipoproteins (VLDL) and intermediate density lipoproteins (IDL) but shows a preferential binding to high-density lipoproteins (HDL). It also binds a wide range of cellular receptors including the LDL receptor/LDLR, the LDL receptor-related proteins LRP1, LRP2 and LRP8 and the very low-density lipoprotein receptor/VLDLR that mediate the cellular uptake of the APOE-containing lipoprotein particles. Finally, APOE also has a heparin-binding activity and binds heparan-sulfate proteoglycans on the surface of cells, a property that supports the capture and the receptor-mediated uptake of APOE-containing lipoproteins by cells. A main function of APOE is to mediate lipoprotein clearance through the uptake of chylomicrons, VLDLs, and HDLs by hepatocytes. APOE is also involved in the biosynthesis by the liver of VLDLs as well as their uptake by peripheral tissues ensuring the delivery of triglycerides and energy storage in muscle, heart and adipose tissues. By participating in the lipoprotein-mediated distribution of lipids among tissues, APOE plays a critical role in plasma and tissues lipid homeostasis. APOE is also involved in two steps of reverse cholesterol transport, the HDLs-mediated transport of cholesterol from peripheral tissues to the liver, and thereby plays an important role in cholesterol homeostasis. First, it is functionally associated with ABCA1 in the biogenesis of HDLs in tissues. Second, it is enriched in circulating HDLs and mediates their uptake by hepatocytes. APOE also plays an important role in lipid transport in the central nervous system, regulating neuron survival and sprouting. This chain is Apolipoprotein E (APOE), found in Dasyprocta punctata (Central American agouti).